Reading from the N-terminus, the 449-residue chain is MRKRKIMLNVIDLRGHVPTTSELRRTLPRGGTDINSVLPIVEPVVTDVKNRGAAAALDYGEKFDHVRPTSIRVPQDVIDQALDSLDPNVIEALKESIARVRAVHSEQLPAQHTTSFGEGATITEKFIPVSRVGLYAPGGNAVYPSSVIMNVVPAQEAGVESLVVASPPQKDHGGWPHPTILAAAKLLGVTEVWAMGGAQAVALLAYGDDTQQNSAEVLEPVDMITGPGNIFVTAAKRLVRGVVGIDSEAGPTEIAIVADAQANPVWIAYDLISQAEHDVLAASVLITDSEELAQRVNEEVAARYSVTRNADRVSEALKGQQSGIVLVDDLPTAVIVADAYAAEHLEIHTAESHKVAEQIRNAGAIFVGGYSPVPLGDYSAGSNHVLPTSGSARYSSGLSTHTFLKPVNVIYYDEVALKEISDTVITLADAEDLPAHGEAIRTRFENLGN.

NAD(+) is bound by residues Tyr-135, Gln-199, and Asn-229. Substrate contacts are provided by Thr-252, Gln-274, and His-277. 2 residues coordinate Zn(2+): Gln-274 and His-277. Active-site proton acceptor residues include Glu-343 and His-344. His-344, Asp-377, Glu-431, and His-436 together coordinate substrate. Asp-377 contacts Zn(2+). A Zn(2+)-binding site is contributed by His-436.

Belongs to the histidinol dehydrogenase family. The cofactor is Zn(2+).

The catalysed reaction is L-histidinol + 2 NAD(+) + H2O = L-histidine + 2 NADH + 3 H(+). The protein operates within amino-acid biosynthesis; L-histidine biosynthesis; L-histidine from 5-phospho-alpha-D-ribose 1-diphosphate: step 9/9. Catalyzes the sequential NAD-dependent oxidations of L-histidinol to L-histidinaldehyde and then to L-histidine. The sequence is that of Histidinol dehydrogenase from Corynebacterium diphtheriae (strain ATCC 700971 / NCTC 13129 / Biotype gravis).